A 133-amino-acid chain; its full sequence is uncharacterized protein (133 aa).

The chain crosses the membrane as a helical span at residues 91-113 (LFATALISCIPSSFSALSFLATL).

Its subcellular location is the membrane. This is an uncharacterized protein from Saccharomyces cerevisiae (strain ATCC 204508 / S288c) (Baker's yeast).